We begin with the raw amino-acid sequence, 601 residues long: Glutathione-regulated potassium-efflux system protein KefB (601 aa).

A run of 13 helical transmembrane segments spans residues 4 to 24 (ADLL…VPLA), 29 to 49 (IGAV…GLGF), 55 to 75 (EILH…GLEL), 87 to 107 (IFGV…GLLM), 111 to 131 (FLWQ…TAMA), 152 to 172 (VLLF…LLAG), 177 to 197 (HFDW…LIGG), 207 to 227 (FIAA…LVLS), 230 to 250 (LFMD…GVLL), 262 to 282 (AIDP…GMSL), 284 to 304 (LGVL…LVVI), 324 to 344 (MQFA…FSTA), and 356 to 376 (ALLL…MKGI). One can recognise an RCK N-terminal domain in the interval 400–519 (KPQVIVVGFG…AGVTQFSRET (120 aa)).

This sequence belongs to the monovalent cation:proton antiporter 2 (CPA2) transporter (TC 2.A.37) family. KefB subfamily. As to quaternary structure, interacts with the regulatory subunit KefG.

The protein resides in the cell inner membrane. Functionally, pore-forming subunit of a potassium efflux system that confers protection against electrophiles. Catalyzes K(+)/H(+) antiport. The protein is Glutathione-regulated potassium-efflux system protein KefB of Salmonella newport (strain SL254).